Here is a 118-residue protein sequence, read N- to C-terminus: Fluoride-specific ion channel FluC 2 (118 aa).

4 helical membrane passes run 1 to 21, 33 to 53, 55 to 75, and 91 to 111; these read MIEA…RFAI, FPLA…YIIG, GVTT…FTTF, and ISTF…FAFL. Na(+)-binding residues include Gly-70 and Thr-73.

It belongs to the fluoride channel Fluc/FEX (TC 1.A.43) family.

It is found in the cell membrane. The enzyme catalyses fluoride(in) = fluoride(out). With respect to regulation, na(+) is not transported, but it plays an essential structural role and its presence is essential for fluoride channel function. Functionally, fluoride-specific ion channel. Important for reducing fluoride concentration in the cell, thus reducing its toxicity. The sequence is that of Fluoride-specific ion channel FluC 2 from Bacillus cereus (strain ATCC 14579 / DSM 31 / CCUG 7414 / JCM 2152 / NBRC 15305 / NCIMB 9373 / NCTC 2599 / NRRL B-3711).